The chain runs to 174 residues: Protein SHI RELATED SEQUENCE 3 (174 aa).

Residues C9, C12, C20, C25, C29, and C36 each coordinate Zn(2+). Positions 9–36 (CEDCGNQAKKDCVYMRCRTCCKSKAFHC) form a DNA-binding region, zn(2)-C6 fungal-type; degenerate. The short motif at 110–113 (IGGH) is the Required for homo- and heterodimerization element.

It belongs to the SHI protein family.

It is found in the nucleus. Its function is as follows. Transcription activator that binds DNA on 5'-ACTCTAC-3' and promotes auxin homeostasis-regulating gene expression (e.g. YUC genes), as well as genes affecting stamen development, cell expansion and timing of flowering. Synergistically with other SHI-related proteins, regulates gynoecium, stamen and leaf development in a dose-dependent manner, controlling apical-basal patterning. Promotes style and stigma formation, and influences vascular development during gynoecium development. May also have a role in the formation and/or maintenance of the shoot apical meristem (SAM). The polypeptide is Protein SHI RELATED SEQUENCE 3 (SRS3) (Arabidopsis thaliana (Mouse-ear cress)).